The following is a 1464-amino-acid chain: Nuclear pore complex protein NUP155 (1464 aa).

The residue at position 2 (Ser-2) is an N-acetylserine.

Belongs to the non-repetitive/WGA-negative nucleoporin family. As to quaternary structure, part of the nuclear pore complex (NPC). The NPC has an eight-fold symmetrical structure comprising a central transport channel and two rings, the cytoplasmic and nuclear rings, to which eight filaments are attached. The cytoplasmic filaments have loose ends, while the nuclear filaments are joined in a distal ring, forming a nuclear basket. NPCs are highly dynamic in configuration and composition, and can be devided in 3 subcomplexes, the NUP62 subcomplex, the NUP107-160 subcomplex and the NUP93 subcomplex, containing approximately 30 different nucleoporin proteins.

The protein localises to the nucleus. Its subcellular location is the nuclear pore complex. Functionally, major component of the nuclear pore complex (NPC). This chain is Nuclear pore complex protein NUP155, found in Arabidopsis thaliana (Mouse-ear cress).